Reading from the N-terminus, the 294-residue chain is uncharacterized protein (294 aa).

This is an uncharacterized protein from Methanocaldococcus jannaschii (strain ATCC 43067 / DSM 2661 / JAL-1 / JCM 10045 / NBRC 100440) (Methanococcus jannaschii).